Here is a 389-residue protein sequence, read N- to C-terminus: Gustatory receptor for bitter taste 22e (389 aa).

Residues 1–14 (MFRPSGSGYRQKWT) are Cytoplasmic-facing. The chain crosses the membrane as a helical span at residues 15 to 35 (GLTLKGALYGSWILGVFPFAY). The Extracellular segment spans residues 36-46 (DSWTRTLRRSK). Residues 47-67 (WLIAYGFVLNAAFILLVVTND) form a helical membrane-spanning segment. Topologically, residues 68–142 (TESETPLRME…SLEECISFDR (75 aa)) are cytoplasmic. A helical transmembrane segment spans residues 143 to 163 (FVLYKGFSVVLELVSMLVLEL). The Extracellular segment spans residues 164-170 (GMSPNYS). Asn168 carries N-linked (GlcNAc...) asparagine glycosylation. The helical transmembrane segment at 171-191 (AQFFIGLGSLCLMLLAVLLGA) threads the bilayer. Over 192–254 (SHFHLAVVFV…QRLASIYDYQ (63 aa)) the chain is Cytoplasmic. The helical transmembrane segment at 255-275 (MVMVMVSFLIANVLGIYFFII) threads the bilayer. Topologically, residues 276 to 287 (YSISLNKSLDFK) are extracellular. Asn281 carries an N-linked (GlcNAc...) asparagine glycan. The chain crosses the membrane as a helical span at residues 288-308 (ILVFVQALVINMLDFWLNVEI). Residues 309 to 366 (CELAERTGRQTSTILKLFNDIENIDEKLERSITDFALFCSHRRLRFHHCGLFYVNYEM) are Cytoplasmic-facing. A helical membrane pass occupies residues 367-387 (GFRMAITSFLYLLFLIQFDYW). Topologically, residues 388 to 389 (NL) are extracellular.

The protein belongs to the insect chemoreceptor superfamily. Gustatory receptor (GR) family. Gr22e subfamily. As to expression, taste bristles on the labial palp, labral and cibarial sense organs, chemosensory bristles on the leg and anterior wing margin. In larvae, is expressed in neurons of the terminal external chemosensory organ and in the dorsal pharyngeal sense organ. Neurons expressing Gr22e also express Gr66a and correspond to taste neurons that mediate sensitivity to bitter compounds.

It localises to the cell membrane. Functionally, gustatory receptor which mediates acceptance or avoidance behavior, depending on its substrates. Seems to be involved in the sensing of bitter taste since it is expressed in neurons that mediate sensitivity to bitter compounds which are also avoidance-type taste neurons. The protein is Gustatory receptor for bitter taste 22e (Gr22e) of Drosophila melanogaster (Fruit fly).